The primary structure comprises 106 residues: Urease subunit beta (106 aa).

This sequence belongs to the urease beta subunit family. As to quaternary structure, heterotrimer of UreA (gamma), UreB (beta) and UreC (alpha) subunits. Three heterotrimers associate to form the active enzyme.

The protein localises to the cytoplasm. It carries out the reaction urea + 2 H2O + H(+) = hydrogencarbonate + 2 NH4(+). Its pathway is nitrogen metabolism; urea degradation; CO(2) and NH(3) from urea (urease route): step 1/1. This Alkalilimnicola ehrlichii (strain ATCC BAA-1101 / DSM 17681 / MLHE-1) protein is Urease subunit beta.